Consider the following 429-residue polypeptide: Glutamate-1-semialdehyde 2,1-aminomutase (429 aa).

Residue Lys-265 is modified to N6-(pyridoxal phosphate)lysine.

Belongs to the class-III pyridoxal-phosphate-dependent aminotransferase family. HemL subfamily. In terms of assembly, homodimer. Pyridoxal 5'-phosphate is required as a cofactor.

The protein resides in the cytoplasm. The enzyme catalyses (S)-4-amino-5-oxopentanoate = 5-aminolevulinate. Its pathway is porphyrin-containing compound metabolism; protoporphyrin-IX biosynthesis; 5-aminolevulinate from L-glutamyl-tRNA(Glu): step 2/2. The chain is Glutamate-1-semialdehyde 2,1-aminomutase from Legionella pneumophila (strain Corby).